The primary structure comprises 173 residues: Translation initiation factor IF-3 (173 aa).

It belongs to the IF-3 family. Monomer.

It localises to the cytoplasm. IF-3 binds to the 30S ribosomal subunit and shifts the equilibrium between 70S ribosomes and their 50S and 30S subunits in favor of the free subunits, thus enhancing the availability of 30S subunits on which protein synthesis initiation begins. The sequence is that of Translation initiation factor IF-3 from Neisseria gonorrhoeae (strain ATCC 700825 / FA 1090).